The chain runs to 372 residues: Glutamate 5-kinase (372 aa).

K14 contacts ATP. S54, D141, and N153 together coordinate substrate. Residues 173 to 174 and 215 to 221 each bind ATP; these read TD and TGGMSTK. Residues 280-358 enclose the PUA domain; the sequence is QGSLVLDAGA…DEIESVLGYD (79 aa).

It belongs to the glutamate 5-kinase family.

The protein resides in the cytoplasm. The catalysed reaction is L-glutamate + ATP = L-glutamyl 5-phosphate + ADP. Its pathway is amino-acid biosynthesis; L-proline biosynthesis; L-glutamate 5-semialdehyde from L-glutamate: step 1/2. Catalyzes the transfer of a phosphate group to glutamate to form L-glutamate 5-phosphate. This is Glutamate 5-kinase from Shewanella oneidensis (strain ATCC 700550 / JCM 31522 / CIP 106686 / LMG 19005 / NCIMB 14063 / MR-1).